Reading from the N-terminus, the 245-residue chain is 1-(5-phosphoribosyl)-5-[(5-phosphoribosylamino)methylideneamino] imidazole-4-carboxamide isomerase (245 aa).

D7 acts as the Proton acceptor in catalysis. D129 acts as the Proton donor in catalysis.

This sequence belongs to the HisA/HisF family.

The protein resides in the cytoplasm. It carries out the reaction 1-(5-phospho-beta-D-ribosyl)-5-[(5-phospho-beta-D-ribosylamino)methylideneamino]imidazole-4-carboxamide = 5-[(5-phospho-1-deoxy-D-ribulos-1-ylimino)methylamino]-1-(5-phospho-beta-D-ribosyl)imidazole-4-carboxamide. Its pathway is amino-acid biosynthesis; L-histidine biosynthesis; L-histidine from 5-phospho-alpha-D-ribose 1-diphosphate: step 4/9. The chain is 1-(5-phosphoribosyl)-5-[(5-phosphoribosylamino)methylideneamino] imidazole-4-carboxamide isomerase from Escherichia coli O45:K1 (strain S88 / ExPEC).